The primary structure comprises 462 residues: Mitochondrial-processing peptidase subunit beta (462 aa).

The N-terminal 20 residues, 1-20 (MFSRTASKFRNTRRLLSTIS), are a transit peptide targeting the mitochondrion. Histidine 70 is a Zn(2+) binding site. Glutamate 73 acts as the Proton acceptor in catalysis. Residues histidine 74 and glutamate 150 each contribute to the Zn(2+) site. At serine 243 the chain carries Phosphoserine.

The protein belongs to the peptidase M16 family. As to quaternary structure, heterodimer of MAS2 (alpha) and MAS1 (beta) subunits, forming the mitochondrial processing protease (MPP) in which MAS2 is involved in substrate recognition and binding and MAS1 is the catalytic subunit. Requires Zn(2+) as cofactor.

Its subcellular location is the mitochondrion matrix. The catalysed reaction is Release of N-terminal transit peptides from precursor proteins imported into the mitochondrion, typically with Arg in position P2.. Its activity is regulated as follows. Binding to MAS2 is required for catalytic activity. Inhibited by high levels (&gt; 1uM) of zinc. Inhibited by metal chelators ethylenediaminetetraacetic acid (EDTA) and O-phenanthroline. Functionally, catalytic subunit of the essential mitochondrial processing protease (MPP), which cleaves the mitochondrial sequence off newly imported precursors proteins. Preferentially, cleaves after an arginine at position P2. The polypeptide is Mitochondrial-processing peptidase subunit beta (Saccharomyces cerevisiae (strain ATCC 204508 / S288c) (Baker's yeast)).